The following is a 292-amino-acid chain: MKNLKGIFSALLVSFNEDGSINEKGLREIVRYNIDKMKIDGLYVGGSTGENFMLSTAEKKEIFRIAKEEAKDQVALIAQVGSVNLHEAVELGKYATELGYDSLSAVTPFYYKFSFAEIKHYYETIIAETGNNMIVYSIPFLTGVNMGVEQFGELYANPKVLGVKFTAGDFYLLERLKKAYPNHLVWAGFDEMMLPAVSLGVDGAIGSTFNVNGLRARQIFELAKAGKVAEALEIQHVTNDLIEGILANGLYLTIKEILKLQGVNAGYCREPMTAKATEKQLAVAKELKEKFL.

S47 and T48 together coordinate aceneuramate. Residue Y136 is the Proton donor of the active site. K164 functions as the Schiff-base intermediate with substrate in the catalytic mechanism. 5 residues coordinate aceneuramate: T166, G188, D190, E191, and S207.

Belongs to the DapA family. NanA subfamily. In terms of assembly, homotetramer.

Its subcellular location is the cytoplasm. It catalyses the reaction aceneuramate = aldehydo-N-acetyl-D-mannosamine + pyruvate. It functions in the pathway amino-sugar metabolism; N-acetylneuraminate degradation; D-fructose 6-phosphate from N-acetylneuraminate: step 1/5. Functionally, catalyzes the reversible aldol cleavage of N-acetylneuraminic acid (sialic acid; Neu5Ac) to form pyruvate and N-acetylmannosamine (ManNAc) via a Schiff base intermediate. In Histophilus somni (strain 129Pt) (Haemophilus somnus), this protein is N-acetylneuraminate lyase.